We begin with the raw amino-acid sequence, 182 residues long: MTTAFPSQVRQNYHQDSEAAINRQINLELHASYVYLSMSFYFDRDDVALKNFAKYFLHQSHEEREHAEKLMKLQNQRGGRIFLQDIKKPDQDDWENGLKAMECALHLEKNVNESLLELHKLATDKNDPHLCDFLETHYLNEQVKAIKELGDHVTNLRRMGAPESGMAEYLFDKHTLGECDES.

Met-1 carries the N-acetylmethionine modification. N-acetylthreonine; in Ferritin heavy chain, N-terminally processed is present on Thr-2. One can recognise a Ferritin-like diiron domain in the interval 11–160 (QNYHQDSEAA…DHVTNLRRMG (150 aa)). Fe cation-binding residues include Glu-28, Glu-63, His-66, Glu-108, and Gln-142.

It belongs to the ferritin family. As to quaternary structure, oligomer of 24 subunits. There are two types of subunits: L (light) chain and H (heavy) chain. The major chain can be light or heavy, depending on the species and tissue type. The functional molecule forms a roughly spherical shell with a diameter of 12 nm and contains a central cavity into which the insoluble mineral iron core is deposited. Interacts with NCOA4; NCOA4 promotes targeting of the iron-binding ferritin complex to autolysosomes following starvation or iron depletion.

It is found in the cytoplasm. The protein localises to the lysosome. The protein resides in the cytoplasmic vesicle. It localises to the autophagosome. It catalyses the reaction 4 Fe(2+) + O2 + 4 H(+) = 4 Fe(3+) + 2 H2O. Its function is as follows. Stores iron in a soluble, non-toxic, readily available form. Important for iron homeostasis. Has ferroxidase activity. Iron is taken up in the ferrous form and deposited as ferric hydroxides after oxidation. Also plays a role in delivery of iron to cells. Mediates iron uptake in capsule cells of the developing kidney. Delivery to lysosomes is mediated by the cargo receptor NCOA4 for autophagic degradation and release of iron. The chain is Ferritin heavy chain (FTH1) from Equus caballus (Horse).